A 417-amino-acid polypeptide reads, in one-letter code: 4-hydroxy-3-methylbut-2-en-1-yl diphosphate synthase (flavodoxin) (417 aa).

The [4Fe-4S] cluster site is built by cysteine 304, cysteine 307, cysteine 350, and glutamate 357.

This sequence belongs to the IspG family. Requires [4Fe-4S] cluster as cofactor.

The catalysed reaction is (2E)-4-hydroxy-3-methylbut-2-enyl diphosphate + oxidized [flavodoxin] + H2O + 2 H(+) = 2-C-methyl-D-erythritol 2,4-cyclic diphosphate + reduced [flavodoxin]. The protein operates within isoprenoid biosynthesis; isopentenyl diphosphate biosynthesis via DXP pathway; isopentenyl diphosphate from 1-deoxy-D-xylulose 5-phosphate: step 5/6. Converts 2C-methyl-D-erythritol 2,4-cyclodiphosphate (ME-2,4cPP) into 1-hydroxy-2-methyl-2-(E)-butenyl 4-diphosphate. The chain is 4-hydroxy-3-methylbut-2-en-1-yl diphosphate synthase (flavodoxin) from Rhizobium meliloti (strain 1021) (Ensifer meliloti).